Consider the following 345-residue polypeptide: Heat-inducible transcription repressor HrcA (345 aa).

Belongs to the HrcA family.

Functionally, negative regulator of class I heat shock genes (grpE-dnaK-dnaJ and groELS operons). Prevents heat-shock induction of these operons. In Zymomonas mobilis subsp. mobilis (strain ATCC 31821 / ZM4 / CP4), this protein is Heat-inducible transcription repressor HrcA.